Consider the following 188-residue polypeptide: Elongation factor P (188 aa).

This sequence belongs to the elongation factor P family.

The protein resides in the cytoplasm. It functions in the pathway protein biosynthesis; polypeptide chain elongation. Functionally, involved in peptide bond synthesis. Stimulates efficient translation and peptide-bond synthesis on native or reconstituted 70S ribosomes in vitro. Probably functions indirectly by altering the affinity of the ribosome for aminoacyl-tRNA, thus increasing their reactivity as acceptors for peptidyl transferase. The chain is Elongation factor P from Leptospira biflexa serovar Patoc (strain Patoc 1 / Ames).